The primary structure comprises 559 residues: Proline--tRNA ligase (559 aa).

Belongs to the class-II aminoacyl-tRNA synthetase family. ProS type 1 subfamily. In terms of assembly, homodimer.

Its subcellular location is the cytoplasm. It catalyses the reaction tRNA(Pro) + L-proline + ATP = L-prolyl-tRNA(Pro) + AMP + diphosphate. Functionally, catalyzes the attachment of proline to tRNA(Pro) in a two-step reaction: proline is first activated by ATP to form Pro-AMP and then transferred to the acceptor end of tRNA(Pro). As ProRS can inadvertently accommodate and process non-cognate amino acids such as alanine and cysteine, to avoid such errors it has two additional distinct editing activities against alanine. One activity is designated as 'pretransfer' editing and involves the tRNA(Pro)-independent hydrolysis of activated Ala-AMP. The other activity is designated 'posttransfer' editing and involves deacylation of mischarged Ala-tRNA(Pro). The misacylated Cys-tRNA(Pro) is not edited by ProRS. This Ruthia magnifica subsp. Calyptogena magnifica protein is Proline--tRNA ligase.